A 390-amino-acid chain; its full sequence is 8-amino-7-oxononanoate synthase (390 aa).

Arginine 22 contributes to the substrate binding site. 109 to 110 contributes to the pyridoxal 5'-phosphate binding site; that stretch reads GY. Residue histidine 134 coordinates substrate. Pyridoxal 5'-phosphate-binding residues include serine 180, histidine 208, and threonine 236. Lysine 239 carries the N6-(pyridoxal phosphate)lysine modification. Threonine 353 is a binding site for substrate.

The protein belongs to the class-II pyridoxal-phosphate-dependent aminotransferase family. BioF subfamily. As to quaternary structure, homodimer. Pyridoxal 5'-phosphate is required as a cofactor.

The enzyme catalyses 6-carboxyhexanoyl-[ACP] + L-alanine + H(+) = (8S)-8-amino-7-oxononanoate + holo-[ACP] + CO2. Its pathway is cofactor biosynthesis; biotin biosynthesis. Its function is as follows. Catalyzes the decarboxylative condensation of pimeloyl-[acyl-carrier protein] and L-alanine to produce 8-amino-7-oxononanoate (AON), [acyl-carrier protein], and carbon dioxide. The protein is 8-amino-7-oxononanoate synthase of Azoarcus sp. (strain BH72).